The sequence spans 575 residues: Transcription factor coe2 (575 aa).

Residues 63 to 66 (RKSN) are interaction with DNA. Residues 151–170 (CRVLLTHEVMCSRCCEKKSC) form a C5-type zinc finger. 2 interaction with DNA regions span residues 197 to 204 (NCLKTAGN) and 236 to 239 (NNSK). One can recognise an IPT/TIG domain in the interval 254–336 (PCIKAISPSE…CKGAPGRFIY (83 aa)). The segment at 450 to 487 (IRNTSSISPRGYSSSSTPQQSNYSTPSNSMNGYSNVPM) is disordered. Over residues 454–476 (SSISPRGYSSSSTPQQSNYSTPS) the composition is skewed to low complexity. The span at 477-487 (NSMNGYSNVPM) shows a compositional bias: polar residues.

It belongs to the COE family.

Its subcellular location is the nucleus. May play a pivotal role in the transcriptional cascade that specifies primary neurons in embryos. Stabilizes the higher neural potential of selected progenitor cells that express neurog2/X-ngnr-1 by maintaining Delta-Notch signaling. Thus ensures the transition between neural competence and irreversible commitment to a neural fate. Also promotes neuronal differentiation by activating neurod1 expression, directly or indirectly. The chain is Transcription factor coe2 from Xenopus tropicalis (Western clawed frog).